Consider the following 317-residue polypeptide: Ribosomal RNA small subunit methyltransferase H (317 aa).

Residues 30–32 (GGH), Asp50, Tyr74, Asp95, and Gln102 each bind S-adenosyl-L-methionine.

It belongs to the methyltransferase superfamily. RsmH family.

Its subcellular location is the cytoplasm. The enzyme catalyses cytidine(1402) in 16S rRNA + S-adenosyl-L-methionine = N(4)-methylcytidine(1402) in 16S rRNA + S-adenosyl-L-homocysteine + H(+). Specifically methylates the N4 position of cytidine in position 1402 (C1402) of 16S rRNA. The protein is Ribosomal RNA small subunit methyltransferase H of Nitrosomonas europaea (strain ATCC 19718 / CIP 103999 / KCTC 2705 / NBRC 14298).